A 526-amino-acid chain; its full sequence is MFS-type transporter clz19 (526 aa).

A disordered region spans residues 1–49; it reads MNVDTTSPQAPLAGVESKQDGASNEATAKAESTTHDQNESSSFDERPVH. A compositionally biased stretch (basic and acidic residues) spans 32–49; that stretch reads STTHDQNESSSFDERPVH. N38 carries an N-linked (GlcNAc...) asparagine glycan. A helical transmembrane segment spans residues 59–79; that stretch reads ALLAVASFAAAISPASTTTYY. A glycan (N-linked (GlcNAc...) asparagine) is linked at N97. The next 3 helical transmembrane spans lie at 126 to 143, 186 to 206, and 214 to 234; these read VYLV…GLAL, AYLT…GGLL, and AIFW…LTFF. Residues N238 and N253 are each glycosylated (N-linked (GlcNAc...) asparagine). A run of 6 helical transmembrane segments spans residues 294–314, 322–342, 384–404, 411–431, 446–466, and 473–493; these read FIVC…ISIF, YGYS…GSIL, LTVS…YGWL, VASV…VLIA, ALGA…VAAV, and IGIG…LPAL.

The protein belongs to the major facilitator superfamily.

It localises to the membrane. Functionally, MFS-type transporter; part of the gene cluster that mediates the biosynthesis of squalestatin S1 (SQS1, also known as zaragozic acid A), a heavily oxidized fungal polyketide that offers potent cholesterol lowering activity by targeting squalene synthase (SS). The polypeptide is MFS-type transporter clz19 (Cochliobolus lunatus (Filamentous fungus)).